The chain runs to 77 residues: RNA-binding protein Hfq (77 aa).

Residues 10 to 70 (DAFLNHVRKT…ISTVMPAQPI (61 aa)) enclose the Sm domain.

Belongs to the Hfq family. In terms of assembly, homohexamer.

Its function is as follows. RNA chaperone that binds small regulatory RNA (sRNAs) and mRNAs to facilitate mRNA translational regulation in response to envelope stress, environmental stress and changes in metabolite concentrations. Also binds with high specificity to tRNAs. The polypeptide is RNA-binding protein Hfq (Jannaschia sp. (strain CCS1)).